A 102-amino-acid polypeptide reads, in one-letter code: Large ribosomal subunit protein bL21 (102 aa).

The protein belongs to the bacterial ribosomal protein bL21 family. Part of the 50S ribosomal subunit. Contacts protein L20.

Its function is as follows. This protein binds to 23S rRNA in the presence of protein L20. The chain is Large ribosomal subunit protein bL21 from Photorhabdus laumondii subsp. laumondii (strain DSM 15139 / CIP 105565 / TT01) (Photorhabdus luminescens subsp. laumondii).